Here is a 566-residue protein sequence, read N- to C-terminus: Transcription factor opdL (566 aa).

The zn(2)-C6 fungal-type DNA-binding region spans 15–45 (CATCARAKCRCVPRNGGRGRCERCHHLNKEC).

The protein localises to the nucleus. Functionally, transcription factor; part of the gene cluster that mediates the biosynthesis of oxopyrrolidines, polyketide-amino acid hybrid compounds with feature structures of tetramic acid. This is Transcription factor opdL from Penicillium oxalicum (strain 114-2 / CGMCC 5302) (Penicillium decumbens).